The chain runs to 827 residues: Sporozoite surface protein 2 (827 aa).

The N-terminal stretch at 1-22 (MKLLGNSKYIFVVLLLCISVFL) is a signal peptide. The VWFA domain maps to 43-228 (DIHILLDGSG…NMIKPFLTKV (186 aa)). The 47-residue stretch at 235–281 (IAHCGKWEEWSECSTTCDEGRKIRRRQILHPGCVSEMTTPCKVRDCP) folds into the TSP type-1 domain. 3 disulfide bridges follow: cysteine 238–cysteine 267, cysteine 247–cysteine 275, and cysteine 251–cysteine 280. A disordered region spans residues 278–761 (RDCPQIPIPP…NKNQSKSNNG (484 aa)). Positions 301–388 (EEPVNPNDPN…NNPNDPSNPN (88 aa)) are enriched in low complexity. Positions 306 to 392 (PNDPNDPNNP…DPSNPNNPNP (87 aa)) are 29 X 3 AA tandem repeats. Over residues 392-407 (PKKRNPKRRNPNKPKP) the composition is skewed to basic residues. A 20 tandem tetra-/hexapeptide repeats region spans residues 402–514 (PNKPKPNKPN…EPSNPNEPSN (113 aa)). Positions 408–464 (NKPNPNKPNPNEPSNPNKPNPNEPSNPNKPNPNEPSNPNKPNPNEPSNPNKPNPNEP) are enriched in pro residues. Low complexity predominate over residues 465–567 (LNPNEPSNPN…KEPSNPNEPS (103 aa)). Repeat copies occupy residues 603–613 (PEESNPKEPIN) and 614–624 (PEESNPKEPIN). The interval 603 to 624 (PEESNPKEPINPEESNPKEPIN) is 2 X 11 AA tandem repeats. The span at 657-671 (KGNNIPSNLPENPSD) shows a compositional bias: polar residues. The segment covering 709–724 (YKGHEERIPKPHRSND) has biased composition (basic and acidic residues). A helical membrane pass occupies residues 764–787 (IAGGIIGGLAILGCAGVGYNFIAG).

The protein resides in the cell membrane. In Plasmodium yoelii yoelii, this protein is Sporozoite surface protein 2 (SSP2).